The primary structure comprises 239 residues: Leucine rich adaptor protein 1 (239 aa).

LRR repeat units follow at residues 55–83 and 93–114; these read LGDK…LVTL and LLEE…QYSL. A compositionally biased stretch (low complexity) spans 105–116; sequence SSLTSSQYSLTG. Residues 105–138 form a disordered region; it reads SSLTSSQYSLTGGSPGRSRRGSWDSLPDTSSTDR. Phosphoserine occurs at positions 118, 126, and 129.

Forms a tripartite complex with CDC42BPA/CDC42BPB and MYO18A acting as an adapter connecting both. Its binding to CDC42BPA/CDC42BPB results in their activation by abolition of their negative autoregulation. Interacts with CDC42BPA and CDC42BPB. Phosphorylated.

It localises to the cytoplasm. Functionally, acts as an activator of the canonical NF-kappa-B pathway and drive the production of pro-inflammatory cytokines. Promotes the antigen (Ag)-presenting and priming function of dendritic cells via the canonical NF-kappa-B pathway. In concert with MYO18A and CDC42BPA/CDC42BPB, is involved in modulating lamellar actomyosin retrograde flow that is crucial to cell protrusion and migration. Activates CDC42BPA/CDC42BPB and targets it to actomyosin through its interaction with MYO18A, leading to MYL9/MLC2 phosphorylation and MYH9/MYH10-dependent actomyosin assembly in the lamella. This Mus musculus (Mouse) protein is Leucine rich adaptor protein 1 (Lurap1).